Consider the following 219-residue polypeptide: Large ribosomal subunit protein uL1 (219 aa).

This sequence belongs to the universal ribosomal protein uL1 family. Part of the 50S ribosomal subunit.

Functionally, binds directly to 23S rRNA. Probably involved in E site tRNA release. In terms of biological role, protein L1 is also a translational repressor protein, it controls the translation of its operon by binding to its mRNA. The protein is Large ribosomal subunit protein uL1 of Pyrococcus horikoshii (strain ATCC 700860 / DSM 12428 / JCM 9974 / NBRC 100139 / OT-3).